A 60-amino-acid polypeptide reads, in one-letter code: Putative transcriptional regulator XtpA (60 aa).

Controls the expression of small non-coding RNA GcvB, which represses the expression of many amino acid transporter proteins and uptake of aminoglycoside antibiotics in cells. Might be a transcriptional activator. An RNA (xtr) with a tRNA-like fold possibly derived from tRNA-Arg(UCG) is encoded entirely within the protein; xtr does not have the sequence corresponding to tRNA anticodon or variable arms. 10 synonymous codon changes in the xtr region of xtpA have the same phenotype as a deletion mutation, suggesting the mRNA secondary structure is important for function. The chain is Putative transcriptional regulator XtpA from Escherichia coli (strain K12).